The chain runs to 165 residues: MKPVTTDLCDAHEDRLAEGTLRVMAPVFRAFGKQPAFAGPAATLKVFEDNSLVRATLESPGRGRVLVIDGGGSLRCALVGGNLGLLAEKNGWVGIVVNGCIRDTAELDVCDIGIRALAAHPQKSQKRNVGESEVTVQMPGAVVRPGNWIYVDVDGILVADDKLER.

Substrate is bound by residues 80-83 (GGNL) and arginine 102. Aspartate 103 is an a divalent metal cation binding site.

The protein belongs to the class II aldolase/RraA-like family. In terms of assembly, homotrimer. A divalent metal cation is required as a cofactor.

It carries out the reaction 4-hydroxy-4-methyl-2-oxoglutarate = 2 pyruvate. The catalysed reaction is oxaloacetate + H(+) = pyruvate + CO2. Functionally, catalyzes the aldol cleavage of 4-hydroxy-4-methyl-2-oxoglutarate (HMG) into 2 molecules of pyruvate. Also contains a secondary oxaloacetate (OAA) decarboxylase activity due to the common pyruvate enolate transition state formed following C-C bond cleavage in the retro-aldol and decarboxylation reactions. This chain is Putative 4-hydroxy-4-methyl-2-oxoglutarate aldolase, found in Cupriavidus taiwanensis (strain DSM 17343 / BCRC 17206 / CCUG 44338 / CIP 107171 / LMG 19424 / R1) (Ralstonia taiwanensis (strain LMG 19424)).